The primary structure comprises 715 residues: Dipeptidyl-peptidase 7 (715 aa).

Positions 1 to 22 (MRKLIFSLVTSFFLLLPSVIRA) are cleaved as a signal peptide. Active-site charge relay system residues include histidine 87, aspartate 223, and serine 650.

Belongs to the peptidase S46 family.

Its function is as follows. Catalyzes the removal of dipeptides from the N-terminus of oligopeptides. Most potently cleaves the synthetic substrate Met-Leu-methylcoumaryl-7-amide (Met-Leu-MCA), followed by Lys-Ala-, Leu-Arg- &gt; Leu-Asp-, Leu-Glu-, &gt;Leu-Lys, and &gt;Val-Arg-MCA, while this enzyme does not hydrolyze Gly-Arg-, Gly-Gly-, Lys-Lys-, or Gly-Pro-MCA. The protein is Dipeptidyl-peptidase 7 (dpp7) of Capnocytophaga gingivalis.